A 299-amino-acid chain; its full sequence is Protease HtpX homolog (299 aa).

Helical transmembrane passes span leucine 19 to phenylalanine 39 and tryptophan 41 to tyrosine 61. Residue histidine 146 participates in Zn(2+) binding. Glutamate 147 is an active-site residue. Histidine 150 serves as a coordination point for Zn(2+). The next 2 membrane-spanning stretches (helical) occupy residues isoleucine 156 to methionine 176 and isoleucine 198 to isoleucine 218. Glutamate 227 provides a ligand contact to Zn(2+).

It belongs to the peptidase M48B family. Zn(2+) serves as cofactor.

It localises to the cell membrane. The polypeptide is Protease HtpX homolog (Thermoanaerobacter pseudethanolicus (strain ATCC 33223 / 39E) (Clostridium thermohydrosulfuricum)).